The sequence spans 387 residues: Methyltransferase phomM' (387 aa).

Positions 98–223 are methyltransferase domain; the sequence is PHRPKDLHIL…QSVADLFTTL (126 aa).

This sequence belongs to the class I-like SAM-binding methyltransferase superfamily. Erg6/SMT family.

The protein operates within mycotoxin biosynthesis. In terms of biological role, methyltransferase; part of the gene cluster that mediates the biosynthesis of the phomopsins, a group of hexapeptide mycotoxins which infects lupins and causes lupinosis disease in livestock. Within the pathway, phomM' acts as an S-adenosylmethionine-dependent alpha-N-methyltransferase that catalyzes two successive N-methylation reactions, converting N-desmethyl-phomopsin A to phomopsin A and phomopsin A further to an N,N-dimethylated congener called phomopsin E. The pathway starts with the processing of the precursor phomA' by several endopeptidases including kexin proteases as well as the cluster-specific S41 family peptidase phomP1 and the oligopeptidase phomG' to produce 10 identical copies of the hexapeptide Tyr-Val-Ile-Pro-Ile-Asp. After being excised from the precursor peptide, the core peptides are cyclized and modified post-translationally by enzymes encoded within the gene cluster. The timing and order of proteolysis of the phomA' precursor and PTMs are still unknown. Two tyrosinase-like enzymes, phomQ1' and phomQ2, catalyze the chlorination and hydroxylation of Tyr, respectively. PhomYb, is proposed to be involved in the construction of the macrocyclic structure. The other 4 ustYa family proteins may be involved in PTMs that generate the unique structure of phomopsin A. PhomYa' is required for the hydroxylation of C-beta of Tyr. PhomYc', phomYd', and phomYe are responsible for the biosynthesis of 2,3-dehydroisoleucine (dIle), 2,3-dehydroaspartic acid (dAsp), and 3,4-dehydroproline (dPro), respectively. While dIle formation by phomYc' is indispensable for the installation of dAsp by phomYd', the order of the other PTMs have not been elucidated yet. Most of the biosynthetic enzymes likely have broad substrate specificity, and thus, there might be a metabolic grid from a precursor to phomopsin A. The enzyme(s) responsible for the biosynthesis of 3,4-dehydrovaline (dVal) have also not been identified yet. Finally, phomM' acts as an S-adenosylmethionine-dependent alpha-N-methyltransferase that catalyzes two successive N-methylation reactions, converting N-desmethyl-phomopsin A to phomopsin A and phomopsin A further to an N,N-dimethylated congener called phomopsin E. In Diaporthe leptostromiformis (Lupinosis disease fungus), this protein is Methyltransferase phomM'.